We begin with the raw amino-acid sequence, 470 residues long: MDFRIRVYNSLGRKLEEFGTVEPNLVKMYVCGPTVYDYVHIGHGRTFVVFDAISRYLRLRGYTVIRVQNITDIDDKIIKKSQEIGKDWNEIVDYFTKDYLDMLSQLKVKIDIHPRVTQHIREIIDFVQRLIDKGHAYVAPSGSVYFDVDTYPNYGELSNTKKEEWNQGEEFVKEKKHSYDFALWKAWKPGEPYWESPWGKGRPGWHIECSTMSTRYLGERFDIHGGGADLIFPHHENERAQTEALIGEKWVTYWVHSAFVTIRKEKMSKSLGNIIPLNEAIKKWGPSVLRYWYLTSHYRSPIDFSEEALEQAKSALQRIKDSMAIIRDVISEGPKFYVKDDDIKVYREILNNLNNFHTAMSNDFDTSTALSYIHEIVRLVFSTLQYSRDFLGAMLAFETLKQFNEVFGVMDEEFYPTYDKMYKIIDAVVDIRNQLRQMKLYEISDKIREELLKAGVRILDSKDKSTWRFE.

Cysteine 31 provides a ligand contact to Zn(2+). A 'HIGH' region motif is present at residues 33–43 (PTVYDYVHIGH). Zn(2+)-binding residues include cysteine 209, histidine 234, and glutamate 238. The 'KMSKS' region signature appears at 266–270 (KMSKS). ATP is bound at residue lysine 269.

Belongs to the class-I aminoacyl-tRNA synthetase family. Requires Zn(2+) as cofactor.

The protein localises to the cytoplasm. The catalysed reaction is tRNA(Cys) + L-cysteine + ATP = L-cysteinyl-tRNA(Cys) + AMP + diphosphate. This is Cysteine--tRNA ligase from Saccharolobus solfataricus (strain ATCC 35092 / DSM 1617 / JCM 11322 / P2) (Sulfolobus solfataricus).